Reading from the N-terminus, the 97-residue chain is Large ribosomal subunit protein bL27 (97 aa).

Over residues 1–10 (MVKLNLSNLQ) the composition is skewed to polar residues. The propeptide occupies 1–12 (MVKLNLSNLQHF). The disordered stretch occupies residues 1 to 38 (MVKLNLSNLQHFAHKKGGGSTSNGRDSQAKRLGAKAAD).

Belongs to the bacterial ribosomal protein bL27 family. In terms of processing, the N-terminus is cleaved by ribosomal processing cysteine protease Prp.

This chain is Large ribosomal subunit protein bL27, found in Streptococcus equi subsp. zooepidemicus (strain H70).